A 1261-amino-acid chain; its full sequence is MKIKEVRITGFRSYKDNTNVSGFSPRSNVVVGRNGSGKSNFFHAIQFVLSDEYAHLKEEQRLGLLHESTGPKVAHARVEITFDNSEKRLMAFENSEVKIVRQVGKKKDQYYIDNKMVPRAEVVNLMESAGFSRSNPYYIVKQGKINELATSPDAYKLKLLREVAGTRVYDERKEESLKILKETKMKTEKIQGLLKYIDERLQTLENEKEDLKEYQKLDKTKRSVEYTMYDNTNKEAIKEKTKLDEQKVELNQKDNNVKSQLNDVIAEMAKLKTDKKKLESLGRGLREDKETLQAEETKMVEEKMTLKLEIDSLNEENTRERQGRQNAEHSLQGVGDEIFKNEEELDTIKPEYAKLLEEESRLKTDIRIDESRAKEILAKQGQRSQFSSVDDRDKFLRNEIRRISGLIADNKEREETIQKELADVEREDEKLNNEIQSISRTIDENRYEMDTFAAKSTSLKQEYDAAYVAQQTAAREEKAIRDKIGNTEQDISAANDQLRRIVARPVYNGITGVRKVIEEFKHDNRNGQHDDVINGYYGTVIELAEVPDMFRTAVEVIAQNRLFYHVVETDRIATKILRKFNEMQLPGEINFFPMNRVSAPRQRDLSNNSNARPMSDVIDYEVQYDKVFKSITANVIIVRTLDQAARDLRNEGFDVVSVDGDQMSKKGVMTGGFIDKKRSKLELHTQKDRFTKELAELQKSLAEAEKMVRERTQEAEKIRNRMQQHENQIGDFHRKHRELTEAKNAISQQFYMVTSTKEPKKDQLLGIKNHLRELLAQKENFEQEIGSNMSSQLTSDEEQTVKKLRKKVDEMTKQLATVSRRRMDLMHRKNAIENLLTKKLYKTKESLTARVDDISDNERRHKLENANAQLTSLLTRMESTRKQLATAISELQDYETKEKALQINIDNVLEQQRDLEKQQADFQLQYDKITAKEDEVKQKREDSLKKLILSRYSIKTRKNQFSYEISDSEEVGAKREPIEHRKLKISTFCLEYRAKLEKVHSNMRLLGALPTDTFSKWQNVKPRELEKKLLECVNELKKYENVNKKALDQYMTASSQKEELTKRMAEQKKSEDSIEELLKVLENRKYEAIDLTFKQVKKNFEQVFKQLVPHGRGKMQMRAREQRDDEEGINSVELYEGISVLVSFVSDDGDSETREMTQLSGGQKSLVALAIIFSIQKCDPAPFYLFDEIDAALDAQHRKSVADMIQSLSDQAQFVTTTFRPELLATAEKFYGVRFRNKVSHIDSVTREQAYDFVEDDTTHG.

Coiled coils occupy residues 188–332 (EKIQ…HSLQ) and 406–450 (LIAD…YEMD). In terms of domain architecture, SMC hinge spans 534–645 (NGYYGTVIEL…IIVRTLDQAA (112 aa)). Coiled-coil stretches lie at residues 677–826 (KRSK…MDLM), 857–930 (NERR…DKIT), and 1023–1085 (RELE…ENRK). The DA-box signature appears at 1159–1193 (LSGGQKSLVALAIIFSIQKCDPAPFYLFDEIDAAL).

This sequence belongs to the SMC family. SMC3 subfamily. In terms of assembly, component of the cohesin complex, composed of the smc-1 and smc-3 heterodimer attached via their SMC hinge domain, scc-1 which links them, and scc-3. Interacts with scc-1, smc-1 and tim-1.

It is found in the nucleus. Its subcellular location is the chromosome. In terms of biological role, involved in chromosome cohesion during cell cycle and in DNA repair. Involved in the repair of double strand breaks during mitosis and meiosis. Required for chromosome segregation during mitosis. Central component of cohesin complex. The cohesin complex is required for the cohesion of sister chromatids after DNA replication. The cohesin complex apparently forms a large proteinaceous ring within which sister chromatids can be trapped. At anaphase, the complex is cleaved and dissociates from chromatin, allowing sister chromatids to segregate. Required for the localization of lab-1 to meiotic and mitotic chromosomes. This Caenorhabditis elegans protein is Structural maintenance of chromosomes protein 3.